The primary structure comprises 89 residues: MVNPGRTARALCLLCLALLLLGQDTHSRKLLLQEKHSHGVGNGTTTTQEPSRENGGSTGSNNNGQLQFDSAKWEEFHTDYIYTQDVKNP.

Residues 1–22 (MVNPGRTARALCLLCLALLLLG) form the signal peptide. The propeptide occupies 23–79 (QDTHSRKLLLQEKHSHGVGNGTTTTQEPSRENGGSTGSNNNGQLQFDSAKWEEFHTD). A disordered region spans residues 33 to 68 (QEKHSHGVGNGTTTTQEPSRENGGSTGSNNNGQLQF). Residue asparagine 42 is glycosylated (N-linked (GlcNAc...) asparagine). 2 positions are modified to sulfotyrosine: tyrosine 80 and tyrosine 82. Residues 85-89 (DVKNP) constitute a propeptide that is removed on maturation.

Belongs to the phytosulfokine family. Post-translationally, sulfation is important for activity and for the binding to a putative membrane receptor. PSK-alpha is produced by endopeptidase digestion. PSK-beta is produced from PSK-alpha by exopeptidase digestion. Expressed throughout the seedling. More abundant in fragments containing shoot or root apexes where cells proliferate vigorously.

The protein resides in the secreted. In terms of biological role, promotes plant cell differentiation, organogenesis and somatic embryogenesis as well as cell proliferation. The chain is Phytosulfokines 1 (PSK1) from Oryza sativa subsp. indica (Rice).